Reading from the N-terminus, the 180-residue chain is Putative manganese efflux pump MntP (180 aa).

6 helical membrane-spanning segments follow: residues 1–21, 34–54, 63–83, 103–123, 129–149, and 160–180; these read MLSVILLAIALAMDAFSISIT, ILWYGIFFGGFQCFMPIIGYV, ISTYAPWIAFILLLCIGLNMI, VTLLAIATSIDAFAVGVTFAI, VIPCAIIGIITFLFSIVGIFI, and KFQILGGVILILLGFKILLGF.

It belongs to the MntP (TC 9.B.29) family.

The protein resides in the cell membrane. Functionally, probably functions as a manganese efflux pump. The sequence is that of Putative manganese efflux pump MntP from Methanosphaera stadtmanae (strain ATCC 43021 / DSM 3091 / JCM 11832 / MCB-3).